Consider the following 494-residue polypeptide: Putative glucuronosyltransferase PGSIP7 (494 aa).

The helical transmembrane segment at 4-24 threads the bilayer; sequence QRTLMFSCWVLSLLIIKTTAY. Positions 161 and 163 each coordinate Mn(2+). 5 helical membrane passes run 316–336, 362–382, 389–409, 410–430, and 444–464; these read YSAEMPWVLTQAVFYLGIILV, AFKFVALLFILSAYIIPFFII, LIGWSLYLTGSFALSTIPINA, FLLPILPVITPWLGIFGTLLV, and LSVFGYAFCCAPFLWVSFVKI.

Belongs to the glycosyltransferase 8 family. Glycogenin subfamily. It depends on Mn(2+) as a cofactor.

The protein resides in the membrane. In Arabidopsis thaliana (Mouse-ear cress), this protein is Putative glucuronosyltransferase PGSIP7 (PGSIP7).